We begin with the raw amino-acid sequence, 327 residues long: Interleukin-12 subunit beta (327 aa).

A signal peptide spans 1–22 (MHPQQLVVSWFSLVLLASPIVA). An Ig-like C2-type domain is found at 23–106 (MWELEKNVYV…LSRSLLLLHK (84 aa)). Residues C50 and C90 are joined by a disulfide bond. N-linked (GlcNAc...) asparagine glycosylation occurs at N223. In terms of domain architecture, Fibronectin type-III spans 238-327 (PPKNLQLRPL…WSEWASVSCS (90 aa)).

It belongs to the IL-12B family. In terms of assembly, heterodimer with IL12A; disulfide-linked. The heterodimer is known as interleukin IL-12. Heterodimer with IL23A; disulfide-linked. The heterodimer is known as interleukin IL-23. Also secreted as a monomer. Interacts with NBR1; this interaction promotes IL-12 secretion.

Its subcellular location is the secreted. Functionally, cytokine that can act as a growth factor for activated T and NK cells, enhance the lytic activity of NK/lymphokine-activated killer cells, and stimulate the production of IFN-gamma by resting PBMC. Its function is as follows. Associates with IL23A to form the IL-23 interleukin, a heterodimeric cytokine which functions in innate and adaptive immunity. IL-23 may constitute with IL-17 an acute response to infection in peripheral tissues. IL-23 binds to a heterodimeric receptor complex composed of IL12RB1 and IL23R, activates the Jak-Stat signaling cascade, stimulates memory rather than naive T-cells and promotes production of pro-inflammatory cytokines. IL-23 induces autoimmune inflammation and thus may be responsible for autoimmune inflammatory diseases and may be important for tumorigenesis. This chain is Interleukin-12 subunit beta (IL12B), found in Bos taurus (Bovine).